A 347-amino-acid chain; its full sequence is Galactoside alpha-(1,2)-fucosyltransferase 2 (347 aa).

At 1–5 (MASAQ) the chain is on the cytoplasmic side. The helical; Signal-anchor for type II membrane protein transmembrane segment at 6–26 (VPFSFPLAHFLIFVFVTSTII) threads the bilayer. Topologically, residues 27–347 (HLQQRIVKLQ…PADLSPLLKH (321 aa)) are lumenal. 4 N-linked (GlcNAc...) asparagine glycosylation sites follow: Asn-192, Asn-258, Asn-286, and Asn-312.

This sequence belongs to the glycosyltransferase 11 family. In terms of tissue distribution, expressed in stomach, colon, ovary and uterus, specifically in luminal uterine epithelium. Expressed in various tissues including heart, liver, kidney, testis, epididymis, small intestine,and cecum. Expressed in duodenum, jejunum and ileum.

It localises to the golgi apparatus. It is found in the golgi stack membrane. The enzyme catalyses a beta-D-galactosyl-(1-&gt;3)-N-acetyl-beta-D-glucosaminyl derivative + GDP-beta-L-fucose = an alpha-L-Fuc-(1-&gt;2)-beta-D-Gal-(1-&gt;3)-beta-D-GlcNAc derivative + GDP + H(+). It carries out the reaction a beta-D-galactosyl-(1-&gt;4)-N-acetyl-beta-D-glucosaminyl derivative + GDP-beta-L-fucose = an alpha-L-Fuc-(1-&gt;2)-beta-D-Gal-(1-&gt;4)-beta-D-GlcNAc derivative + GDP + H(+). It catalyses the reaction a neolactoside nLc4Cer + GDP-beta-L-fucose = a neolactoside IV(2)-alpha-Fuc-nLc4Cer + GDP + H(+). The catalysed reaction is a neolactoside nLc4Cer(d18:1(4E)) + GDP-beta-L-fucose = a neolactoside IV(2)-alpha-Fuc-nLc4Cer(d18:1(4E)) + GDP + H(+). The enzyme catalyses a ganglioside GM1 + GDP-beta-L-fucose = a ganglioside Fuc-GM1 + GDP + H(+). It carries out the reaction a ganglioside GA1 + GDP-beta-L-fucose = a ganglioside Fuc-GA1 + GDP + H(+). It catalyses the reaction Lc4Cer + GDP-beta-L-fucose = alpha-L-fucosyl-(1-&gt;2)-beta-D-galactosyl-(1-&gt;3)-N-acetyl-beta-D-glucosaminyl-(1-&gt;3)-beta-D-galactosyl-(1-&gt;4)-beta-D-glucosyl-(1&lt;-&gt;1')-ceramide + GDP + H(+). The catalysed reaction is a beta-D-Gal-(1-&gt;3)-beta-D-GlcNAc-(1-&gt;3)-beta-D-Gal-(1-&gt;4)-beta-D-Glc-(1&lt;-&gt;1')-Cer(d18:1(4E)) + GDP-beta-L-fucose = alpha-L-fucosyl-(1-&gt;2)- beta-D-galactosyl-(1-&gt;3)-N-acetyl-beta-D-glucosaminyl-(1-&gt;3)-beta-D-galactosyl-(1-&gt;4)-beta-D-glucosyl-(1&lt;-&gt;1')-N-acylsphing-4-enine + GDP + H(+). The enzyme catalyses a ganglioside GD1b + GDP-beta-L-fucose = a ganglioside Fuc-GD1b + GDP + H(+). It carries out the reaction a ganglioside GM1 (d18:1(4E)) + GDP-beta-L-fucose = a ganglioside Fuc-GM1 (d18:1(4E)) + GDP + H(+). It catalyses the reaction a globoside GalGb4Cer (d18:1(4E)) + GDP-beta-L-fucose = a globoside Globo-H (d18:1(4E)) + GDP + H(+). The catalysed reaction is a lactoside III(4)-a-Fuc-Lc4Cer + GDP-beta-L-fucose = a lactoside IV(2),III(4)-a-[Fuc]2-Lc4Cer + GDP + H(+). The enzyme catalyses beta-D-galactosyl-(1-&gt;3)-N-acetyl-D-galactosamine + GDP-beta-L-fucose = alpha-L-fucosyl-(1-&gt;2)-beta-D-galactosyl-(1-&gt;3)-N-acetyl-D-galactosamine + GDP + H(+). It participates in protein modification; protein glycosylation. In terms of biological role, catalyzes the transfer of L-fucose, from a guanosine diphosphate-beta-L-fucose, to the terminal galactose on both O- and N-linked glycans chains of cell surface glycoproteins and glycolipids and the resulting epitope regulates several processes such as cell-cell interaction including host-microbe interaction, cell surface expression and cell proliferation. Preferentially fucosylates gangliosides GA1 and GM1 in the antrum, cecum and colon and in the female reproductive organs. Fucosylated host glycoproteins or glycolipids mediate interaction with intestinal microbiota influencing its composition. Creates a soluble precursor oligosaccharide FuC-alpha ((1,2)Galbeta-) called the H antigen which is an essential substrate for the final step in the soluble ABO blood group antigen synthesis pathway. The polypeptide is Galactoside alpha-(1,2)-fucosyltransferase 2 (Mus musculus (Mouse)).